The chain runs to 443 residues: MSTSDSIVSSQTKQSSWRKSDTTWTLGLFGTAIGAGVLFFPIRAGFGGLIPILLMLVLAYPIAFYCHRALARLCLSGSNPSGNITETVEEHFGKTGGVVITFLYFFAICPLLWIYGVTITNTFMTFWENQLGFAPLNRGFVALFLLLLMAFVIWFGKDLMVKVMSYLVWPFIASLVLISLSLIPYWNSAVIDQVDLGSLSLTGHDGILITVWLGISIMVFSFNFSPIVSSFVVSKREEYEKDFGRDFTERKCSQIISRASMLMVAVVMFFAFSCLFTLSPANMAEAKAQNIPVLSYLANHFASMTGTKTTLAITLEYAASIIALVAIFKSFFGHYLGTLEGLNGLILKFGYKGDKTKVSLGKLNTISMIFIMGSTWVVAYANPNILDLIEAMGAPIIASLLCLLPMYAIRKAPSLAKYRGRLDNVFVTVIGLLTILNIVYKLF.

Helical transmembrane passes span Thr22–Ile42, Ala44–Phe64, Gly97–Val117, Phe140–Met160, Val163–Ile183, Ile207–Ile227, Met261–Ala281, Ala312–Phe332, Ile366–Leu386, Ile389–Ile409, and Asp423–Phe443.

The protein belongs to the amino acid/polyamine transporter 2 family. SdaC/TdcC subfamily.

Its subcellular location is the cell inner membrane. The catalysed reaction is L-threonine(in) + H(+)(in) = L-threonine(out) + H(+)(out). It catalyses the reaction L-serine(in) + H(+)(in) = L-serine(out) + H(+)(out). Involved in the import of threonine and serine into the cell, with the concomitant import of a proton (symport system). This Escherichia coli O45:K1 (strain S88 / ExPEC) protein is Threonine/serine transporter TdcC.